A 162-amino-acid chain; its full sequence is NADH-quinone oxidoreductase subunit I (162 aa).

4Fe-4S ferredoxin-type domains follow at residues 53-83 (LRRY…IESE) and 93-122 (TRYD…ETHI). The [4Fe-4S] cluster site is built by cysteine 63, cysteine 66, cysteine 69, cysteine 73, cysteine 102, cysteine 105, cysteine 108, and cysteine 112.

The protein belongs to the complex I 23 kDa subunit family. As to quaternary structure, NDH-1 is composed of 14 different subunits. Subunits NuoA, H, J, K, L, M, N constitute the membrane sector of the complex. The cofactor is [4Fe-4S] cluster.

Its subcellular location is the cell inner membrane. It carries out the reaction a quinone + NADH + 5 H(+)(in) = a quinol + NAD(+) + 4 H(+)(out). Its function is as follows. NDH-1 shuttles electrons from NADH, via FMN and iron-sulfur (Fe-S) centers, to quinones in the respiratory chain. The immediate electron acceptor for the enzyme in this species is believed to be ubiquinone. Couples the redox reaction to proton translocation (for every two electrons transferred, four hydrogen ions are translocated across the cytoplasmic membrane), and thus conserves the redox energy in a proton gradient. The sequence is that of NADH-quinone oxidoreductase subunit I from Bordetella bronchiseptica (strain ATCC BAA-588 / NCTC 13252 / RB50) (Alcaligenes bronchisepticus).